We begin with the raw amino-acid sequence, 218 residues long: Large ribosomal subunit protein uL3 (218 aa).

The segment at 121-163 (GYQKRHGFSRGPMTHGSKNHREPGSIGPGTTPGRIYPGKRMAG) is disordered.

This sequence belongs to the universal ribosomal protein uL3 family. As to quaternary structure, part of the 50S ribosomal subunit. Forms a cluster with proteins L14 and L19.

Its function is as follows. One of the primary rRNA binding proteins, it binds directly near the 3'-end of the 23S rRNA, where it nucleates assembly of the 50S subunit. The sequence is that of Large ribosomal subunit protein uL3 from Parasynechococcus marenigrum (strain WH8102).